Consider the following 221-residue polypeptide: Ras-related protein Rab-28 (221 aa).

Serine 2 is modified (N-acetylserine). Serine 8 bears the Phosphoserine mark. GTP is bound by residues glycine 21, glycine 24, lysine 25, threonine 26, serine 27, glycine 38, lysine 39, tyrosine 41, and threonine 44. Position 26 (threonine 26) interacts with Mg(2+). The tract at residues 35 to 49 (ETFGKRYKQTIGLDF) is switch I. Residues threonine 44 and aspartate 68 each coordinate Mg(2+). The segment at 68–85 (DIGGQTIGGKMLDKYIYG) is switch II. GTP-binding residues include glycine 71, asparagine 129, lysine 130, aspartate 132, alanine 160, and lysine 161. Cysteine 218 is subject to Cysteine methyl ester. Cysteine 218 carries S-farnesyl cysteine lipidation. Positions 219–221 (AVQ) are cleaved as a propeptide — removed in mature form.

This sequence belongs to the small GTPase superfamily. Rab family. Interacts (prenylated form) with PDE6D; the interaction promotes RAB28 delivery to the photoreceptor outer segments. Interacts with KCNJ13; the interaction may facilitate cone outer segments phagocytosis. Also participates in nuclear factor kappa-B p65/RELA nuclear transport in endothelial cells. Mg(2+) is required as a cofactor. Post-translationally, isoprenylated.

It localises to the cell membrane. The protein resides in the cytoplasm. The protein localises to the cytoskeleton. Its subcellular location is the cilium basal body. It is found in the nucleus. The enzyme catalyses GTP + H2O = GDP + phosphate + H(+). Its activity is regulated as follows. Regulated by guanine nucleotide exchange factors (GEFs) which promote the exchange of bound GDP for free GTP. Regulated by GTPase activating proteins (GAPs) which increase the GTP hydrolysis activity. Inhibited by GDP dissociation inhibitors (GDIs). Functionally, the small GTPases Rab are key regulators of intracellular membrane trafficking, from the formation of transport vesicles to their fusion with membranes. Rabs cycle between an inactive GDP-bound form and an active GTP-bound form that is able to recruit to membranes different sets of downstream effectors directly responsible for vesicle formation, movement, tethering and fusion. RAB28 is required for shedding and phagocytosis of cone cell outer segments (OS) discs in the retina. Also participates in nuclear factor kappa-B p65/RELA nuclear transport in endothelial cells. The chain is Ras-related protein Rab-28 (RAB28) from Pongo abelii (Sumatran orangutan).